A 436-amino-acid polypeptide reads, in one-letter code: 3-ketoacyl-CoA thiolase (436 aa).

The Acyl-thioester intermediate role is filled by cysteine 99. Catalysis depends on proton acceptor residues histidine 392 and cysteine 422.

Belongs to the thiolase-like superfamily. Thiolase family. Heterotetramer of two alpha chains (FadJ) and two beta chains (FadI).

The protein resides in the cytoplasm. The enzyme catalyses an acyl-CoA + acetyl-CoA = a 3-oxoacyl-CoA + CoA. It participates in lipid metabolism; fatty acid beta-oxidation. Functionally, catalyzes the final step of fatty acid oxidation in which acetyl-CoA is released and the CoA ester of a fatty acid two carbons shorter is formed. The sequence is that of 3-ketoacyl-CoA thiolase from Salmonella typhimurium (strain LT2 / SGSC1412 / ATCC 700720).